The chain runs to 688 residues: Potassium-transporting ATPase ATP-binding subunit (688 aa).

4 consecutive transmembrane segments (helical) span residues 34–54, 62–82, 219–239, and 260–280; these read PVMF…LAIL, ALFT…ANFA, VALT…TATL, and VLVA…LSAI. The active-site 4-aspartylphosphate intermediate is the Asp-313. Residues Asp-350, Glu-354, 383–390, and Lys-401 contribute to the ATP site; that span reads FSAQTRMS. 2 residues coordinate Mg(2+): Asp-524 and Asp-528. 3 helical membrane-spanning segments follow: residues 594-614, 622-642, and 667-687; these read FAII…LNVM, AILS…PLAL, and GLLV…ALIM.

The protein belongs to the cation transport ATPase (P-type) (TC 3.A.3) family. Type IA subfamily. The system is composed of three essential subunits: KdpA, KdpB and KdpC.

Its subcellular location is the cell inner membrane. It carries out the reaction K(+)(out) + ATP + H2O = K(+)(in) + ADP + phosphate + H(+). In terms of biological role, part of the high-affinity ATP-driven potassium transport (or Kdp) system, which catalyzes the hydrolysis of ATP coupled with the electrogenic transport of potassium into the cytoplasm. This subunit is responsible for energy coupling to the transport system and for the release of the potassium ions to the cytoplasm. This is Potassium-transporting ATPase ATP-binding subunit from Yersinia enterocolitica serotype O:8 / biotype 1B (strain NCTC 13174 / 8081).